A 338-amino-acid chain; its full sequence is Ferrochelatase (338 aa).

The Fe cation site is built by histidine 202 and glutamate 283.

This sequence belongs to the ferrochelatase family.

It is found in the cytoplasm. The enzyme catalyses heme b + 2 H(+) = protoporphyrin IX + Fe(2+). It participates in porphyrin-containing compound metabolism; protoheme biosynthesis; protoheme from protoporphyrin-IX: step 1/1. Catalyzes the ferrous insertion into protoporphyrin IX. In Acinetobacter baumannii (strain ATCC 17978 / DSM 105126 / CIP 53.77 / LMG 1025 / NCDC KC755 / 5377), this protein is Ferrochelatase.